The sequence spans 71 residues: UPF0435 protein BPUM_0734 (71 aa).

The protein belongs to the UPF0435 family.

This chain is UPF0435 protein BPUM_0734, found in Bacillus pumilus (strain SAFR-032).